We begin with the raw amino-acid sequence, 138 residues long: MISLTDTQKIGMGLTGFGVFFLFFGMILFFDKALLAIGNVLFVAGLAFVIGLERTFRFFFQRHKVKATGFFLGGVFVVLIGWPLIGMIFEIYGFFLLFRGFFPVVVGFIRRVPVLGSLLNLPGIRSFVDKVGESNNMV.

N-acetylmethionine is present on methionine 1. Residues 1–9 (MISLTDTQK) lie on the Cytoplasmic side of the membrane. A helical transmembrane segment spans residues 10–30 (IGMGLTGFGVFFLFFGMILFF). At 31-32 (DK) the chain is on the lumenal side. Residues 33-53 (ALLAIGNVLFVAGLAFVIGLE) form a helical membrane-spanning segment. Residues 54–68 (RTFRFFFQRHKVKAT) lie on the Cytoplasmic side of the membrane. Glutamate 90 is a topological domain (lumenal). A helical membrane pass occupies residues 91–109 (IYGFFLLFRGFFPVVVGFI). The Cytoplasmic portion of the chain corresponds to 110–138 (RRVPVLGSLLNLPGIRSFVDKVGESNNMV).

Belongs to the GOT1 family.

The protein resides in the golgi apparatus membrane. Functionally, may be involved in fusion of ER-derived transport vesicles with the Golgi complex. In Mus musculus (Mouse), this protein is Vesicle transport protein GOT1B (Golt1b).